A 186-amino-acid polypeptide reads, in one-letter code: Large ribosomal subunit protein uL5 (186 aa).

This sequence belongs to the universal ribosomal protein uL5 family. In terms of assembly, part of the 50S ribosomal subunit; part of the 5S rRNA/L5/L18/L25 subcomplex. Contacts the 5S rRNA and the P site tRNA. Forms a bridge to the 30S subunit in the 70S ribosome.

Its function is as follows. This is one of the proteins that bind and probably mediate the attachment of the 5S RNA into the large ribosomal subunit, where it forms part of the central protuberance. In the 70S ribosome it contacts protein S13 of the 30S subunit (bridge B1b), connecting the 2 subunits; this bridge is implicated in subunit movement. Contacts the P site tRNA; the 5S rRNA and some of its associated proteins might help stabilize positioning of ribosome-bound tRNAs. This chain is Large ribosomal subunit protein uL5, found in Ruegeria pomeroyi (strain ATCC 700808 / DSM 15171 / DSS-3) (Silicibacter pomeroyi).